The primary structure comprises 60 residues: Conotoxin PnMRCL-022 (60 aa).

An N-terminal signal peptide occupies residues 1–22; the sequence is MRCLPVFVILLLLIASTPSVNA. A propeptide spanning residues 23–45 is cleaved from the precursor; it reads RPKTKDLASFHDNAKRTQHIFWS.

It belongs to the conotoxin T superfamily. Post-translationally, contains 2 disulfide bonds that can be either 'C1-C3, C2-C4' or 'C1-C4, C2-C3', since these disulfide connectivities have been observed for conotoxins with cysteine framework V (for examples, see AC P0DQQ7 and AC P81755). In terms of tissue distribution, expressed by the venom duct.

The protein resides in the secreted. The sequence is that of Conotoxin PnMRCL-022 from Conus pennaceus (Feathered cone).